The sequence spans 345 residues: tRNA-dihydrouridine(20/20a) synthase (345 aa).

Residues 32-34 (PML) and Gln-84 contribute to the FMN site. Residue Cys-114 is the Proton donor of the active site. FMN is bound by residues Lys-153, His-186, 226-228 (NGG), and 248-249 (GR).

It belongs to the Dus family. DusA subfamily. It depends on FMN as a cofactor.

The enzyme catalyses 5,6-dihydrouridine(20) in tRNA + NADP(+) = uridine(20) in tRNA + NADPH + H(+). The catalysed reaction is 5,6-dihydrouridine(20) in tRNA + NAD(+) = uridine(20) in tRNA + NADH + H(+). It catalyses the reaction 5,6-dihydrouridine(20a) in tRNA + NADP(+) = uridine(20a) in tRNA + NADPH + H(+). It carries out the reaction 5,6-dihydrouridine(20a) in tRNA + NAD(+) = uridine(20a) in tRNA + NADH + H(+). Its function is as follows. Catalyzes the synthesis of 5,6-dihydrouridine (D), a modified base found in the D-loop of most tRNAs, via the reduction of the C5-C6 double bond in target uridines. Specifically modifies U20 and U20a in tRNAs. The protein is tRNA-dihydrouridine(20/20a) synthase of Escherichia coli O157:H7.